Here is a 154-residue protein sequence, read N- to C-terminus: Protein phosphatase 1 regulatory subunit 27 (154 aa).

2 ANK repeats span residues 63–92 (SGLA…DIHQ) and 96–125 (AGWT…DRDA).

In terms of assembly, interacts with DYSF and PPP1CA.

Its function is as follows. Inhibits phosphatase activity of protein phosphatase 1 (PP1) complexes. The protein is Protein phosphatase 1 regulatory subunit 27 (PPP1R27) of Homo sapiens (Human).